The primary structure comprises 335 residues: Serpentine receptor class gamma-11 (335 aa).

7 helical membrane passes run 33–53 (FLQIAYLIPGGILNILLLYTI), 66–86 (FFLIYSTDCFVSFSMIFLDII), 98–118 (PIIAPMFYEPLIGFKIMMIVL), 154–174 (LKYLIILVFVIPFSIDWNLII), 202–222 (FQLIFITIALLFTIVCTSVIF), 242–262 (GTAYISMSFIILVVFQFLFAF), and 271–291 (TIFGYSLLSYDILNVGSPIIM).

This sequence belongs to the nematode receptor-like protein srg family.

It localises to the membrane. The sequence is that of Serpentine receptor class gamma-11 (srg-11) from Caenorhabditis elegans.